Reading from the N-terminus, the 146-residue chain is Snaclec 4 (146 aa).

Residues 1–23 form the signal peptide; that stretch reads MGRFISISFGLLVVFLSLSGTEA. Disulfide bonds link C27-C38, C55-C144, and C121-C136. The C-type lectin domain occupies 34–145; the sequence is YDQNCYKVFT…CNFIAPVVCK (112 aa).

The protein belongs to the snaclec family. Heterodimer; disulfide-linked.

Its subcellular location is the secreted. Its function is as follows. Interferes with one step of hemostasis (modulation of platelet aggregation, or coagulation cascade, for example). The chain is Snaclec 4 from Daboia siamensis (Eastern Russel's viper).